The following is a 124-amino-acid chain: UPF0231 protein Shewana3_0655 (124 aa).

This sequence belongs to the UPF0231 family.

This chain is UPF0231 protein Shewana3_0655, found in Shewanella sp. (strain ANA-3).